The chain runs to 692 residues: Mitogen-activated protein kinase kinase kinase 7-interacting protein 3 homolog (692 aa).

The CUE domain occupies Leu8–Cys51. Disordered stretches follow at residues Asn138–Thr159, Tyr206–Pro333, and Ser349–Ser427. 3 stretches are compositionally biased toward polar residues: residues Pro215–Trp230, Gln249–His298, and Ser349–Pro387. A compositionally biased stretch (low complexity) spans Ser409 to Ser422. A coiled-coil region spans residues Ala496–Arg580. A disordered region spans residues Ser598–Phe662. Basic and acidic residues predominate over residues Cys608 to Arg620. The RanBP2-type zinc-finger motif lies at Phe662–Thr692.

Functionally, may play a role in signaling pathway. This Xenopus laevis (African clawed frog) protein is Mitogen-activated protein kinase kinase kinase 7-interacting protein 3 homolog (map3k7ip3).